The following is a 332-amino-acid chain: 4-hydroxy-3-methylbut-2-enyl diphosphate reductase (332 aa).

Position 34 (C34) interacts with [4Fe-4S] cluster. (2E)-4-hydroxy-3-methylbut-2-enyl diphosphate contacts are provided by H63 and H96. Residues H63 and H96 each contribute to the dimethylallyl diphosphate site. 2 residues coordinate isopentenyl diphosphate: H63 and H96. C118 provides a ligand contact to [4Fe-4S] cluster. H146 contributes to the (2E)-4-hydroxy-3-methylbut-2-enyl diphosphate binding site. Residue H146 participates in dimethylallyl diphosphate binding. H146 contributes to the isopentenyl diphosphate binding site. The active-site Proton donor is E148. T186 is a (2E)-4-hydroxy-3-methylbut-2-enyl diphosphate binding site. Residue C216 coordinates [4Fe-4S] cluster. (2E)-4-hydroxy-3-methylbut-2-enyl diphosphate contacts are provided by S244, S245, N246, and S289. Residues S244, S245, N246, and S289 each contribute to the dimethylallyl diphosphate site. S244, S245, N246, and S289 together coordinate isopentenyl diphosphate.

Belongs to the IspH family. The cofactor is [4Fe-4S] cluster.

It carries out the reaction isopentenyl diphosphate + 2 oxidized [2Fe-2S]-[ferredoxin] + H2O = (2E)-4-hydroxy-3-methylbut-2-enyl diphosphate + 2 reduced [2Fe-2S]-[ferredoxin] + 2 H(+). The catalysed reaction is dimethylallyl diphosphate + 2 oxidized [2Fe-2S]-[ferredoxin] + H2O = (2E)-4-hydroxy-3-methylbut-2-enyl diphosphate + 2 reduced [2Fe-2S]-[ferredoxin] + 2 H(+). Its pathway is isoprenoid biosynthesis; dimethylallyl diphosphate biosynthesis; dimethylallyl diphosphate from (2E)-4-hydroxy-3-methylbutenyl diphosphate: step 1/1. The protein operates within isoprenoid biosynthesis; isopentenyl diphosphate biosynthesis via DXP pathway; isopentenyl diphosphate from 1-deoxy-D-xylulose 5-phosphate: step 6/6. Its function is as follows. Catalyzes the conversion of 1-hydroxy-2-methyl-2-(E)-butenyl 4-diphosphate (HMBPP) into a mixture of isopentenyl diphosphate (IPP) and dimethylallyl diphosphate (DMAPP). Acts in the terminal step of the DOXP/MEP pathway for isoprenoid precursor biosynthesis. The sequence is that of 4-hydroxy-3-methylbut-2-enyl diphosphate reductase from Mycobacterium leprae (strain TN).